The chain runs to 191 residues: Thymidine kinase (191 aa).

Residues 15–22 (GPMYSGKT) and 88–91 (DEAQ) each bind ATP. Glu-89 serves as the catalytic Proton acceptor. Residues Cys-145, Cys-148, Cys-183, and Cys-186 each contribute to the Zn(2+) site.

The protein belongs to the thymidine kinase family. Homotetramer.

Its subcellular location is the cytoplasm. It catalyses the reaction thymidine + ATP = dTMP + ADP + H(+). The chain is Thymidine kinase from Clostridium botulinum (strain Hall / ATCC 3502 / NCTC 13319 / Type A).